We begin with the raw amino-acid sequence, 541 residues long: Tryptophan N-monooxygenase 1 (541 aa).

Residues 21–41 (FSTLYLLSTLQAFVAITLVML) traverse the membrane as a helical segment. C477 provides a ligand contact to heme.

Belongs to the cytochrome P450 family. The cofactor is heme. In terms of tissue distribution, found in all tissues tested. Highest expression in roots, and low expression in stem.

It is found in the membrane. The enzyme catalyses L-tryptophan + 2 reduced [NADPH--hemoprotein reductase] + 2 O2 = (E)-(indol-3-yl)acetaldehyde oxime + 2 oxidized [NADPH--hemoprotein reductase] + CO2 + 3 H2O + 2 H(+). In terms of biological role, converts tryptophan to indole-3-acetaldoxime, a precursor for tryptophan-derived glucosinolates and indole-3-acetic acid (IAA). Involved in the biosynthetic pathway to 4-hydroxyindole-3-carbonyl nitrile (4-OH-ICN), a cyanogenic metabolite required for inducible pathogen defense. This is Tryptophan N-monooxygenase 1 (CYP79B2) from Arabidopsis thaliana (Mouse-ear cress).